Here is a 112-residue protein sequence, read N- to C-terminus: Protein Churchill (112 aa).

Zn(2+)-binding residues include C2, C5, C30, C33, H59, C61, C64, H66, H71, C88, and C91.

This sequence belongs to the Churchill family.

Its function is as follows. Transcriptional activator that mediates FGF signaling during neural development. Plays a role in the regulation of cell movement. Does not bind DNA by itself. The sequence is that of Protein Churchill (churc1) from Xenopus laevis (African clawed frog).